Reading from the N-terminus, the 98-residue chain is Endoribonuclease antitoxin GhoS (98 aa).

Monomer. Unlike other TA antitoxins, this protein is stable.

In terms of biological role, antitoxin component of a type V toxin-antitoxin (TA) system. Neutralizes the toxic effects of toxin GhoT by digesting ghoT transcripts in a sequence-specific manner. In concert with GhoT is involved in reducing cell growth during antibacterial stress. This chain is Endoribonuclease antitoxin GhoS, found in Escherichia coli O157:H7.